The primary structure comprises 216 residues: MARIIDLVPWDECSAHLYASPAILIPLERVRRPLAGVKHQLYHPGLPSLRRMDMDSVKGCLSDEHCQSSTYYTKDDFNEAHFTLLGVPNKPLHCLDFTATGQKLCHKYRDGKMIPIVPGIQRADWPCFTRAIEDWSQFVSKSGEFKLPCANRRVEGFSGYAVRYLKPELTQNWRYCLNQNPSLDRYGQKPLPFNTLNSFRRFGSHYSRINYLTPWH.

In terms of assembly, microtubule inner protein component of sperm flagellar doublet microtubules.

It localises to the cytoplasm. The protein resides in the cytoskeleton. Its subcellular location is the flagellum axoneme. Microtubule inner protein (MIP) part of the dynein-decorated doublet microtubules (DMTs) in flagellum axoneme. May serve to reinforce and thus stabilize the microtubule structure in the sperm flagella. This Rattus norvegicus (Rat) protein is Sperm microtubule inner protein 8 (Spmip8).